The primary structure comprises 331 residues: MEVNQKWNWDTKPILVKCGGFSSQLAKNVTEKVDGDPLWGSRFDATNPEAVIQTHLDFLRNGADIILTNTYQSSVEGFVKYLGVTRERGVELIQKSVQLAKQAKEQYLSEIGSEAESALPLIMGSIGPYGAYLHDGSEYTGNYADKMSKEELRAWHKTRIEICLAAGVDGLALETLPCLMEAEAVTELVLDNFPDAKFWVSLQCMDEKHMASGENFAEAALSLWRLVQSRKAENRLLGIGLNCVNPLFVTPLLSSLTKVAGSDRIPLVVYSNRGEIYDVEQGDWTGTGEEVVKFVPEWIQLGVRIVGGCCRVYPTDVLAIRKYVDGLNIKP.

A Hcy-binding domain is found at 3 to 324 (VNQKWNWDTK…TDVLAIRKYV (322 aa)). Cys-243, Cys-309, and Cys-310 together coordinate Zn(2+).

It belongs to the Betaine-homocysteine S-methyltransferase, BHMT family. Requires Zn(2+) as cofactor.

The catalysed reaction is L-homocysteine + glycine betaine = N,N-dimethylglycine + L-methionine. It participates in amino-acid biosynthesis; L-methionine biosynthesis via de novo pathway. Involved in the regulation of homocysteine metabolism. Converts betaine and homocysteine to dimethylglycine and methionine, respectively. This Drosophila melanogaster (Fruit fly) protein is Betaine-homocysteine S-methyltransferase.